The chain runs to 380 residues: Chaperone protein DnaJ (380 aa).

The region spanning aspartate 5–glycine 70 is the J domain. The CR-type zinc finger occupies glycine 135–serine 213. Residues cysteine 148, cysteine 151, cysteine 165, cysteine 168, cysteine 187, cysteine 190, cysteine 201, and cysteine 204 each coordinate Zn(2+). CXXCXGXG motif repeat units lie at residues cysteine 148–glycine 155, cysteine 165–glycine 172, cysteine 187–glycine 194, and cysteine 201–glycine 208.

Belongs to the DnaJ family. As to quaternary structure, homodimer. Zn(2+) is required as a cofactor.

It is found in the cytoplasm. Its function is as follows. Participates actively in the response to hyperosmotic and heat shock by preventing the aggregation of stress-denatured proteins and by disaggregating proteins, also in an autonomous, DnaK-independent fashion. Unfolded proteins bind initially to DnaJ; upon interaction with the DnaJ-bound protein, DnaK hydrolyzes its bound ATP, resulting in the formation of a stable complex. GrpE releases ADP from DnaK; ATP binding to DnaK triggers the release of the substrate protein, thus completing the reaction cycle. Several rounds of ATP-dependent interactions between DnaJ, DnaK and GrpE are required for fully efficient folding. Also involved, together with DnaK and GrpE, in the DNA replication of plasmids through activation of initiation proteins. In Erwinia tasmaniensis (strain DSM 17950 / CFBP 7177 / CIP 109463 / NCPPB 4357 / Et1/99), this protein is Chaperone protein DnaJ.